The primary structure comprises 267 residues: Small ribosomal subunit protein eS4 (267 aa).

The region spanning 42 to 104 (LPLILVLRNR…TKENFRLLFD (63 aa)) is the S4 RNA-binding domain.

It belongs to the eukaryotic ribosomal protein eS4 family.

The protein resides in the cytoplasm. The polypeptide is Small ribosomal subunit protein eS4 (rps4) (Dictyostelium discoideum (Social amoeba)).